Here is a 247-residue protein sequence, read N- to C-terminus: ATP synthase subunit a, chloroplastic (247 aa).

5 helical membrane passes run 38 to 58, 95 to 115, 134 to 154, 199 to 219, and 220 to 240; these read QVLI…AIAV, VPFI…GALL, INTT…AGLT, LVVV…VMFL, and GLFT…AYIG.

Belongs to the ATPase A chain family. In terms of assembly, F-type ATPases have 2 components, CF(1) - the catalytic core - and CF(0) - the membrane proton channel. CF(1) has five subunits: alpha(3), beta(3), gamma(1), delta(1), epsilon(1). CF(0) has four main subunits: a, b, b' and c.

Its subcellular location is the plastid. It localises to the chloroplast thylakoid membrane. In terms of biological role, key component of the proton channel; it plays a direct role in the translocation of protons across the membrane. This Illicium oligandrum (Star anise) protein is ATP synthase subunit a, chloroplastic.